We begin with the raw amino-acid sequence, 312 residues long: Ribosomal RNA small subunit methyltransferase H (312 aa).

S-adenosyl-L-methionine-binding positions include 35 to 37 (GGH), Asp54, Phe81, Asp100, and Gln107.

It belongs to the methyltransferase superfamily. RsmH family.

The protein resides in the cytoplasm. It catalyses the reaction cytidine(1402) in 16S rRNA + S-adenosyl-L-methionine = N(4)-methylcytidine(1402) in 16S rRNA + S-adenosyl-L-homocysteine + H(+). Specifically methylates the N4 position of cytidine in position 1402 (C1402) of 16S rRNA. The chain is Ribosomal RNA small subunit methyltransferase H from Campylobacter jejuni subsp. jejuni serotype O:2 (strain ATCC 700819 / NCTC 11168).